The primary structure comprises 406 residues: Tryptophan synthase beta chain (406 aa).

Lys99 is subject to N6-(pyridoxal phosphate)lysine.

Belongs to the TrpB family. In terms of assembly, tetramer of two alpha and two beta chains. The cofactor is pyridoxal 5'-phosphate.

The catalysed reaction is (1S,2R)-1-C-(indol-3-yl)glycerol 3-phosphate + L-serine = D-glyceraldehyde 3-phosphate + L-tryptophan + H2O. Its pathway is amino-acid biosynthesis; L-tryptophan biosynthesis; L-tryptophan from chorismate: step 5/5. Functionally, the beta subunit is responsible for the synthesis of L-tryptophan from indole and L-serine. The chain is Tryptophan synthase beta chain from Rhizobium johnstonii (strain DSM 114642 / LMG 32736 / 3841) (Rhizobium leguminosarum bv. viciae).